Consider the following 539-residue polypeptide: MVKEIKFSEDARRAMLAGVDKLADAVKVTLGPKGRNVVLDKKFVAPLITNDGVTIAKEIELEDPYENMGAKLVAEVANKTNEIAGDGTTTATVLAQAMIQEGLKNVTSGANPVGIRQGIDKAVAVALEELAAISKTVSSKEEIAQVGSISAADEEIGQFISEAMEKVGNDGVITIEESKGFKTELEVVEGMQFDRGYASPYMVTDSDKMIADLENPYILITDKKISSFQDILPILEQIVQTSRPILIVAEDVDGDALTNIVLNRLRGTFTAVAVKAPGFGDRRKAMLEDLAILTGGQVITDDLGLDLKDTTVEMLGNAGKVHVTKDNTTIVEGRGDASNIDARVGQLKAQIEETTSEFDKEKLQERLAKLAGGVAVIKVGAATETELKERKLRIEDALNSTRAAVEEGIVAGGGTALVSIYNKVAAVEATGDVATGVKIVLKALEAPIRQIAENAGLEGSVIVEKIKHAETGVGYNAATDEWVNMIDAGIVDPTKVTRSALQNAASVAAMFLTTEAVVAEMPEENPTPDMGMGGMPGMM.

ATP contacts are provided by residues 29-32, 86-90, Gly413, 476-478, and Asp492; these read TLGP, DGTTT, and NAA.

Belongs to the chaperonin (HSP60) family. As to quaternary structure, forms a cylinder of 14 subunits composed of two heptameric rings stacked back-to-back. Interacts with the co-chaperonin GroES.

Its subcellular location is the cytoplasm. The enzyme catalyses ATP + H2O + a folded polypeptide = ADP + phosphate + an unfolded polypeptide.. Functionally, together with its co-chaperonin GroES, plays an essential role in assisting protein folding. The GroEL-GroES system forms a nano-cage that allows encapsulation of the non-native substrate proteins and provides a physical environment optimized to promote and accelerate protein folding. This is Chaperonin GroEL from Macrococcus caseolyticus (strain JCSC5402) (Macrococcoides caseolyticum).